A 247-amino-acid chain; its full sequence is Probable enoyl-CoA hydratase echA6 (247 aa).

It belongs to the enoyl-CoA hydratase/isomerase family.

The enzyme catalyses a (3S)-3-hydroxyacyl-CoA = a (2E)-enoyl-CoA + H2O. The catalysed reaction is a 4-saturated-(3S)-3-hydroxyacyl-CoA = a (3E)-enoyl-CoA + H2O. Its function is as follows. Could possibly oxidize fatty acids using specific components. This is Probable enoyl-CoA hydratase echA6 (echA6) from Mycobacterium leprae (strain TN).